The primary structure comprises 419 residues: UDP-N-acetylglucosamine 1-carboxyvinyltransferase (419 aa).

22 to 23 is a phosphoenolpyruvate binding site; it reads KN. Arginine 91 contributes to the UDP-N-acetyl-alpha-D-glucosamine binding site. Residue cysteine 115 is the Proton donor of the active site. Cysteine 115 is modified (2-(S-cysteinyl)pyruvic acid O-phosphothioketal). UDP-N-acetyl-alpha-D-glucosamine contacts are provided by residues 120–124, 160–163, aspartate 305, and isoleucine 327; these read RPVDL and KVSV.

The protein belongs to the EPSP synthase family. MurA subfamily.

It is found in the cytoplasm. The enzyme catalyses phosphoenolpyruvate + UDP-N-acetyl-alpha-D-glucosamine = UDP-N-acetyl-3-O-(1-carboxyvinyl)-alpha-D-glucosamine + phosphate. It functions in the pathway cell wall biogenesis; peptidoglycan biosynthesis. Functionally, cell wall formation. Adds enolpyruvyl to UDP-N-acetylglucosamine. This is UDP-N-acetylglucosamine 1-carboxyvinyltransferase from Citrobacter koseri (strain ATCC BAA-895 / CDC 4225-83 / SGSC4696).